The following is a 192-amino-acid chain: uncharacterized protein (192 aa).

One can recognise a Nudix hydrolase domain in the interval 29–160 (HRQAAVLIPI…PLDIYRRGDS (132 aa)). A Nudix box motif is present at residues 67–89 (GAVDDTDTSVIAAALREAEEEVA). The Mg(2+) site is built by glutamate 83 and glutamate 87.

This sequence belongs to the Nudix hydrolase family. PCD1 subfamily. The cofactor is Mn(2+). Mg(2+) is required as a cofactor.

In terms of biological role, probably mediates the hydrolysis of some nucleoside diphosphate derivatives. This is an uncharacterized protein from Escherichia coli O6:H1 (strain CFT073 / ATCC 700928 / UPEC).